Here is a 225-residue protein sequence, read N- to C-terminus: MVPRGFFITFEGGEGAGKSTQIHLLADRLRREGRDVLTTREPGGSPGAEAIRHVLLSGAAEPFGATLEAILFAAARSDHVEQVIRPAVESGAIVLCDRFLDSSRVYQGVTGGLASDFMAALERVTVNGLIPDLTVILDIDPEEGLRRASERRGKATADRFEKENLEIHRRRREAFLNIAAREPQRCVVIDASRSADAVSENVTEIVLRVIFDRAGLSEPTEAGSV.

Residue 12–19 (GGEGAGKS) coordinates ATP.

The protein belongs to the thymidylate kinase family.

The enzyme catalyses dTMP + ATP = dTDP + ADP. In terms of biological role, phosphorylation of dTMP to form dTDP in both de novo and salvage pathways of dTTP synthesis. The polypeptide is Thymidylate kinase (Chelativorans sp. (strain BNC1)).